Here is a 379-residue protein sequence, read N- to C-terminus: Chaperone protein DnaJ (379 aa).

In terms of domain architecture, J spans 5–70; the sequence is DYYELLEVSR…QKRAAYDQFG (66 aa). The segment at 135 to 213 adopts a CR-type zinc-finger fold; sequence GKEVEITVPR…CHGQGRVRES (79 aa). C148, C151, C165, C168, C187, C190, C201, and C204 together coordinate Zn(2+). 4 CXXCXGXG motif repeats span residues 148 to 155, 165 to 172, 187 to 194, and 201 to 208; these read CTVCEGSG, CETCQGMG, CPTCHGEG, and CASCHGQG.

The protein belongs to the DnaJ family. Homodimer. Requires Zn(2+) as cofactor.

It is found in the cytoplasm. Participates actively in the response to hyperosmotic and heat shock by preventing the aggregation of stress-denatured proteins and by disaggregating proteins, also in an autonomous, DnaK-independent fashion. Unfolded proteins bind initially to DnaJ; upon interaction with the DnaJ-bound protein, DnaK hydrolyzes its bound ATP, resulting in the formation of a stable complex. GrpE releases ADP from DnaK; ATP binding to DnaK triggers the release of the substrate protein, thus completing the reaction cycle. Several rounds of ATP-dependent interactions between DnaJ, DnaK and GrpE are required for fully efficient folding. Also involved, together with DnaK and GrpE, in the DNA replication of plasmids through activation of initiation proteins. The protein is Chaperone protein DnaJ of Legionella pneumophila (strain Corby).